The following is a 397-amino-acid chain: Riboflavin biosynthesis protein RibBA (397 aa).

Residues 1–199 (MFHRIEEALE…IEDLIAYRRH (199 aa)) are DHBP synthase. D-ribulose 5-phosphate is bound by residues 26–27 (RE), aspartate 31, 138–142 (RAGHT), and glutamate 162. Residue glutamate 27 coordinates Mg(2+). Histidine 141 serves as a coordination point for Mg(2+). The interval 200–397 (HETLVTREVE…VNKLGHLLNL (198 aa)) is GTP cyclohydrolase II. 250–254 (RVHSE) provides a ligand contact to GTP. 3 residues coordinate Zn(2+): cysteine 255, cysteine 266, and cysteine 268. GTP is bound by residues glutamine 271, 293 to 295 (EGR), and threonine 315. Aspartate 327 acts as the Proton acceptor; for GTP cyclohydrolase activity in catalysis. Catalysis depends on arginine 329, which acts as the Nucleophile; for GTP cyclohydrolase activity. GTP-binding residues include threonine 350 and lysine 355.

In the N-terminal section; belongs to the DHBP synthase family. The protein in the C-terminal section; belongs to the GTP cyclohydrolase II family. Mg(2+) serves as cofactor. The cofactor is Mn(2+). Zn(2+) is required as a cofactor.

The enzyme catalyses D-ribulose 5-phosphate = (2S)-2-hydroxy-3-oxobutyl phosphate + formate + H(+). It carries out the reaction GTP + 4 H2O = 2,5-diamino-6-hydroxy-4-(5-phosphoribosylamino)-pyrimidine + formate + 2 phosphate + 3 H(+). It participates in cofactor biosynthesis; riboflavin biosynthesis; 2-hydroxy-3-oxobutyl phosphate from D-ribulose 5-phosphate: step 1/1. Its pathway is cofactor biosynthesis; riboflavin biosynthesis; 5-amino-6-(D-ribitylamino)uracil from GTP: step 1/4. Catalyzes the conversion of D-ribulose 5-phosphate to formate and 3,4-dihydroxy-2-butanone 4-phosphate. Functionally, catalyzes the conversion of GTP to 2,5-diamino-6-ribosylamino-4(3H)-pyrimidinone 5'-phosphate (DARP), formate and pyrophosphate. The polypeptide is Riboflavin biosynthesis protein RibBA (Bacillus cereus (strain ATCC 10987 / NRS 248)).